The sequence spans 278 residues: HTH-type transcriptional activator RhaS (278 aa).

The region spanning 174-272 is the HTH araC/xylS-type domain; sequence NQLLAWLEDH…DWSPRDIRQG (99 aa). DNA-binding regions (H-T-H motif) lie at residues 191-212 and 239-262; these read EEVA…KQQT and VTDI…RREF.

In terms of assembly, binds DNA as a dimer.

It localises to the cytoplasm. Functionally, activates expression of the rhaBAD and rhaT operons. The sequence is that of HTH-type transcriptional activator RhaS from Klebsiella pneumoniae (strain 342).